We begin with the raw amino-acid sequence, 330 residues long: MNNYFSMEAFDYDDIQLVPNKAIVKSRKECVTSVKFGNRTFKIPVVPANMESVIDEKLAVWLAQNGYYYVMHRFQPEKRADFIKMMHEKGLFASISVGIKDDEYDFIDELVEKDLIPEYTTIDVAHGHSVYVIDMIKYIKEKMPDTFLTAGNVATPEAVRELENAGADATKVGVGPGKACITKLKTGFGTGGWQLAALRMCSKVARKPLIADGGIRHNGDIAKSVRFGASMVMIGSMLAGHEESPGNVIKIDGKTYKQYWGSASEVQKGAYRNVEGKQMLVPYRGSIANTLEEMKEDLQSSISYAGGRDLESIKRVDYVIVKNTIMNGDY.

The Thioimidate intermediate role is filled by Cys180. Residue 209 to 232 coordinates NADP(+); the sequence is LIADGGIRHNGDIAKSVRFGASMV.

This sequence belongs to the IMPDH/GMPR family. GuaC type 2 subfamily.

The catalysed reaction is IMP + NH4(+) + NADP(+) = GMP + NADPH + 2 H(+). Functionally, catalyzes the irreversible NADPH-dependent deamination of GMP to IMP. It functions in the conversion of nucleobase, nucleoside and nucleotide derivatives of G to A nucleotides, and in maintaining the intracellular balance of A and G nucleotides. This chain is GMP reductase, found in Lactobacillus delbrueckii subsp. bulgaricus (strain ATCC 11842 / DSM 20081 / BCRC 10696 / JCM 1002 / NBRC 13953 / NCIMB 11778 / NCTC 12712 / WDCM 00102 / Lb 14).